Here is a 184-residue protein sequence, read N- to C-terminus: ATP synthase subunit delta (184 aa).

This sequence belongs to the ATPase delta chain family. In terms of assembly, F-type ATPases have 2 components, F(1) - the catalytic core - and F(0) - the membrane proton channel. F(1) has five subunits: alpha(3), beta(3), gamma(1), delta(1), epsilon(1). F(0) has three main subunits: a(1), b(2) and c(10-14). The alpha and beta chains form an alternating ring which encloses part of the gamma chain. F(1) is attached to F(0) by a central stalk formed by the gamma and epsilon chains, while a peripheral stalk is formed by the delta and b chains.

The protein resides in the cell inner membrane. Its function is as follows. F(1)F(0) ATP synthase produces ATP from ADP in the presence of a proton or sodium gradient. F-type ATPases consist of two structural domains, F(1) containing the extramembraneous catalytic core and F(0) containing the membrane proton channel, linked together by a central stalk and a peripheral stalk. During catalysis, ATP synthesis in the catalytic domain of F(1) is coupled via a rotary mechanism of the central stalk subunits to proton translocation. Functionally, this protein is part of the stalk that links CF(0) to CF(1). It either transmits conformational changes from CF(0) to CF(1) or is implicated in proton conduction. The sequence is that of ATP synthase subunit delta from Zymomonas mobilis subsp. mobilis (strain ATCC 31821 / ZM4 / CP4).